A 748-amino-acid polypeptide reads, in one-letter code: Phosphoenolpyruvate-dependent phosphotransferase system (748 aa).

Residues 1-127 (MLTRLREIVE…RRQLLGVLVV (127 aa)) form the GAF domain. Residues 128-170 (QQRELRQYDESEESFLVTLATQMAAILSQSQLTALFGQYRQTR) form a linker region. Positions 171–748 (IRALPAAPGV…GMGGLIRGGL (578 aa)) are PTS EI. His356 functions as the Tele-phosphohistidine intermediate in the catalytic mechanism. Arg462 and Arg498 together coordinate phosphoenolpyruvate. Mg(2+) is bound by residues Glu597 and Asp621. Phosphoenolpyruvate contacts are provided by residues 620–621 (ND) and Arg631. Cys668 acts as the Proton donor in catalysis.

This sequence belongs to the PEP-utilizing enzyme family. The cofactor is Mg(2+).

It is found in the cytoplasm. The enzyme catalyses L-histidyl-[protein] + phosphoenolpyruvate = N(pros)-phospho-L-histidyl-[protein] + pyruvate. Inhibited by GDP and FAD. Component of the phosphoenolpyruvate-dependent nitrogen-metabolic phosphotransferase system (nitrogen-metabolic PTS), that seems to be involved in regulating nitrogen metabolism. Enzyme I-Ntr transfers the phosphoryl group from phosphoenolpyruvate (PEP) to the phosphoryl carrier protein (NPr). Could function in the transcriptional regulation of sigma-54 dependent operons in conjunction with the NPr (PtsO) and EIIA-Ntr (PtsN) proteins. Enzyme I-Ntr is specific for NPr. This Escherichia coli (strain K12) protein is Phosphoenolpyruvate-dependent phosphotransferase system (ptsP).